The primary structure comprises 1159 residues: CRISPR-associated endoribonuclease Cas13a (1159 aa).

The tract at residues 1-11 is binds crRNA repeat and spacer; the sequence is MKVTKVGGISH. Residues 1-170 are NTD; it reads MKVTKVGGIS…NNIEKVEGKS (170 aa). 6 binds crRNA repeat regions span residues 139-151, 172-176, 224-233, 271-276, 294-297, and 301-305; these read NKIN…FEKN, RNIIY, REFYHEIIGR, QVFYKY, HFVE, and SQLLK. Residues 171–360 are helical-1; it reads KRNIIYDYYR…YNYYLQDGEI (190 aa). The interval 319-328 is binds crRNA processing site; sequence KIKRIFEYQN. Binds crRNA repeat regions lie at residues 336–340 and 371–378; these read KLLNK and QNEAFLRN. The interval 361–508 is HEPN-like fold 1-I; that stretch reads ATSDFIARNR…SKKMFQNEIN (148 aa). Residues Arg-472 and His-477 each act as for target RNA cleavage in the active site. The helical-2 stretch occupies residues 509-751; it reads EKKLKLKIFR…EFLREIKLGN (243 aa). A binds target RNA region spans residues 519–522; sequence QLNS. Residues 547–558 form a binds crRNA spacer region; it reads NKNIPFVPSFTK. The tract at residues 590–597 is binds target RNA; that stretch reads DAQIYLLK. The binds crRNA spacer stretch occupies residues 718–722; that stretch reads KQEFD. Positions 752–813 are HEPN-like fold 1-II; the sequence is ILKYTERLNM…NLDNNRVTED (62 aa). Residues 780–783 form a binds crRNA repeat region; the sequence is SLEK. Residues 804-810 are binds crRNA spacer and target RNA; that stretch reads NLDNNRV. Positions 814–946 are linker; sequence FELEADEIGK…EYTHLKNKVE (133 aa). 2 binds crRNA spacer regions span residues 845–857 and 938–942; these read KIYF…IKHR and YTHLK. Residues 880–946 are a coiled coil; the sequence is YKISIEELKK…EYTHLKNKVE (67 aa). Positions 947 to 1159 are HEPN-like fold 2; that stretch reads FNELNLLQGL…YKMEEKKSEN (213 aa). Residues 962-963 are binds crRNA repeat; the sequence is HR. The tract at residues 995–998 is binds 3'-end of target RNA, in adjacent protein; it reads FENK. Residues Arg-1048 and His-1053 each act as for target RNA cleavage in the active site. Binds crRNA processing site stretches follow at residues 1072–1082 and 1104–1108; these read RKLLSYDRKLK and IGADK.

The protein belongs to the CRISPR-associated endoribonuclease Cas13a family. Crystals show the 3'-end of target RNA interacting with an adjacent protein molecule, and mutagenesis of those amino acid residues decreases target RNA cleavage, but it is not clear if this is physiological. A divalent metal cation serves as cofactor.

Target RNA acts as an activator for non-specific ssRNA cleavage; the target RNA and complementary crRNA must both be at least 20 nucleotides long to activate the HEPN-like catalytic pocket for RNase activity. Its function is as follows. CRISPR (clustered regularly interspaced short palindromic repeat), is an adaptive immune system that provides protection against mobile genetic elements (viruses, transposable elements and conjugative plasmids). CRISPR clusters contain sequences complementary to antecedent mobile elements (spacer sequences) and target invading nucleic acids. Unlike many single-component effectors, this CRISPR-Cas system targets RNA. CRISPR clusters are transcribed from pre-CRISPR RNA (crRNA) and processed into crRNA by this protein. pre-crRNA processing yields a 5'-OH and probably a 2',3'-cyclic phosphate. Also cleaves pre-crRNA from several other type VI-A CRISPR systems. Cleaves linear target ssRNA in a crRNA-dependent fashion, preferentially before U residues. Cleavage of target ssRNA is about 80-fold faster than pre-crRNA processing and uses a different active site. Binding a viable target RNA target activates this protein for non-specific RNA degradation in vitro (called collateral RNA degradation). Activation occurs with 10 fM target RNA. crRNA maturation is not essential for activation of RNA degradation, but lack of mature crRNA (due to mutagenesis) decreases activation levels. This system has a 3' protospacer flanking site in the target RNA (PFS), which is C and unavailable to base pair with crRNA (PFS is equivalent to PAM, the protospacer adjacent motif). The chain is CRISPR-associated endoribonuclease Cas13a from Leptotrichia buccalis (strain ATCC 14201 / DSM 1135 / JCM 12969 / NCTC 10249 / C-1013-b).